Reading from the N-terminus, the 567-residue chain is MTELDKRHRSSIYDSMVKSPNRAMLRATGMTDKDFETSIVGVISTWAENTPCNIHLHDFGKLAKEGVKSAGAWPVQFGTITVADGIAMGTPGMRFSLTSRDIIADSIEAAMSGHNVDAFVAIGGCDKNMPGSMIAIANMDIPAIFAYGGTIAPGNLDGKDIDLVSVFEGIGKWNHGDMTAEDVKRLECNACPGPGGCGGMYTANTMATAIEVLGMSLPGSSSHPAESADKKEDIEAAGRAVVKMLELGLKPSDILTREAFEDAITVTMALGGSTNATLHLLAIAHAANVDLSLEDFNTIQERVPHLADLKPSGQYVFQDLYEVGGVPAVMKYLLANGFLHGDRITCTGKTVAENLADFADLTPGQKVIMPLENPKRADGPLIILNGNLAPDGAVAKVSGVKVRRHVGPAKVFDSEEDAIQAVLTDEIVDGDVVVVRFVGPKGGPGMPEMLSLSSMIVGKGQGDKVALLTDGRFSGGTYGLVVGHIAPEAQDGGPIAYLRTGDIVTVDQDTKEISMAVSEEELEKRKAETTLPPLYSRGVLGKYAYIVSSASRGAVTDFWNMDKSGKK.

Cys52 is a binding site for [2Fe-2S] cluster. Asp84 serves as a coordination point for Mg(2+). Residue Cys125 participates in [2Fe-2S] cluster binding. Residues Asp126 and Lys127 each coordinate Mg(2+). N6-carboxylysine is present on Lys127. Residue Cys197 coordinates [2Fe-2S] cluster. Glu448 provides a ligand contact to Mg(2+). Ser474 serves as the catalytic Proton acceptor.

This sequence belongs to the IlvD/Edd family. Homodimer. It depends on [2Fe-2S] cluster as a cofactor. The cofactor is Mg(2+).

The enzyme catalyses (2R)-2,3-dihydroxy-3-methylbutanoate = 3-methyl-2-oxobutanoate + H2O. It carries out the reaction (2R,3R)-2,3-dihydroxy-3-methylpentanoate = (S)-3-methyl-2-oxopentanoate + H2O. It participates in amino-acid biosynthesis; L-isoleucine biosynthesis; L-isoleucine from 2-oxobutanoate: step 3/4. It functions in the pathway amino-acid biosynthesis; L-valine biosynthesis; L-valine from pyruvate: step 3/4. Functions in the biosynthesis of branched-chain amino acids. Catalyzes the dehydration of (2R,3R)-2,3-dihydroxy-3-methylpentanoate (2,3-dihydroxy-3-methylvalerate) into 2-oxo-3-methylpentanoate (2-oxo-3-methylvalerate) and of (2R)-2,3-dihydroxy-3-methylbutanoate (2,3-dihydroxyisovalerate) into 2-oxo-3-methylbutanoate (2-oxoisovalerate), the penultimate precursor to L-isoleucine and L-valine, respectively. This is Dihydroxy-acid dehydratase from Streptococcus pneumoniae (strain CGSP14).